The sequence spans 189 residues: 7-methyl-GTP pyrophosphatase (189 aa).

Asp71 serves as the catalytic Proton acceptor.

It belongs to the Maf family. YceF subfamily. It depends on a divalent metal cation as a cofactor.

The protein resides in the cytoplasm. The enzyme catalyses N(7)-methyl-GTP + H2O = N(7)-methyl-GMP + diphosphate + H(+). Functionally, nucleoside triphosphate pyrophosphatase that hydrolyzes 7-methyl-GTP (m(7)GTP). May have a dual role in cell division arrest and in preventing the incorporation of modified nucleotides into cellular nucleic acids. The polypeptide is 7-methyl-GTP pyrophosphatase (Bdellovibrio bacteriovorus (strain ATCC 15356 / DSM 50701 / NCIMB 9529 / HD100)).